The primary structure comprises 132 residues: MAITYSIGDMLTKLRNASRVGHGSVDLKMSNMNKSILNILKEEGYIKDFNFLEKKGIAFIRVLLKYDNKRNPVINKIDAISTPGRKIYSSYRNMPRIKNGYGILIISSSQGVITGKEAKDKKIGGELICSVW.

The protein belongs to the universal ribosomal protein uS8 family. In terms of assembly, part of the 30S ribosomal subunit. Contacts proteins S5 and S12.

One of the primary rRNA binding proteins, it binds directly to 16S rRNA central domain where it helps coordinate assembly of the platform of the 30S subunit. The protein is Small ribosomal subunit protein uS8 of Borreliella burgdorferi (strain ZS7) (Borrelia burgdorferi).